A 251-amino-acid chain; its full sequence is tRNA pseudouridine synthase A (251 aa).

D52 serves as the catalytic Nucleophile. Y113 serves as a coordination point for substrate.

The protein belongs to the tRNA pseudouridine synthase TruA family. Homodimer.

The enzyme catalyses uridine(38/39/40) in tRNA = pseudouridine(38/39/40) in tRNA. Its function is as follows. Formation of pseudouridine at positions 38, 39 and 40 in the anticodon stem and loop of transfer RNAs. The polypeptide is tRNA pseudouridine synthase A (Brucella abortus (strain 2308)).